We begin with the raw amino-acid sequence, 226 residues long: Deoxyribose-phosphate aldolase (226 aa).

Residue Asp93 is the Proton donor/acceptor of the active site. Lys159 functions as the Schiff-base intermediate with acetaldehyde in the catalytic mechanism. Catalysis depends on Lys189, which acts as the Proton donor/acceptor.

It belongs to the DeoC/FbaB aldolase family. DeoC type 1 subfamily.

It is found in the cytoplasm. The enzyme catalyses 2-deoxy-D-ribose 5-phosphate = D-glyceraldehyde 3-phosphate + acetaldehyde. It functions in the pathway carbohydrate degradation; 2-deoxy-D-ribose 1-phosphate degradation; D-glyceraldehyde 3-phosphate and acetaldehyde from 2-deoxy-alpha-D-ribose 1-phosphate: step 2/2. Functionally, catalyzes a reversible aldol reaction between acetaldehyde and D-glyceraldehyde 3-phosphate to generate 2-deoxy-D-ribose 5-phosphate. In Mycobacterium marinum (strain ATCC BAA-535 / M), this protein is Deoxyribose-phosphate aldolase.